A 108-amino-acid polypeptide reads, in one-letter code: MVHTTVYGLAYLFYSGINCILLYQLEIESKFYIRYQLIMRVQKETTDAFTLQLASKEVITSSIYNTFNNTNEHMYLQPICNRIFLMTSIIDIASFKAQVLFLNIFMIK.

2 helical membrane passes run 5–27 (TVYG…QLEI) and 83–105 (IFLM…LNIF).

The protein localises to the membrane. This is an uncharacterized protein from Schizosaccharomyces pombe (strain 972 / ATCC 24843) (Fission yeast).